Consider the following 376-residue polypeptide: Growth/differentiation factor 8 (376 aa).

The N-terminal stretch at 1–24 (MIQKPQMYVYIYLFVLIAAGPVDL) is a signal peptide. Positions 25-267 (NEDSEREANV…VTDTPKRSRR (243 aa)) are excised as a propeptide. N72 is a glycosylation site (N-linked (GlcNAc...) asparagine). 4 cysteine pairs are disulfide-bonded: C273–C283, C282–C341, C310–C373, and C314–C375.

It belongs to the TGF-beta family. As to quaternary structure, homodimer; disulfide-linked. Interacts with WFIKKN2, leading to inhibit its activity. Interacts with FSTL3. Synthesized as large precursor molecule that undergoes proteolytic cleavage to generate an N-terminal propeptide and a disulfide linked C-terminal dimer, which is the biologically active molecule. The circulating form consists of a latent complex of the C-terminal dimer and other proteins, including its propeptide, which maintain the C-terminal dimer in a latent, inactive state. Ligand activation requires additional cleavage of the prodomain by a tolloid-like metalloproteinase.

The protein localises to the secreted. In terms of biological role, acts specifically as a negative regulator of skeletal muscle growth. The sequence is that of Growth/differentiation factor 8 (Mstn) from Rattus norvegicus (Rat).